The primary structure comprises 430 residues: Tol-Pal system protein TolB (430 aa).

A signal peptide spans M1–A21.

It belongs to the TolB family. As to quaternary structure, the Tol-Pal system is composed of five core proteins: the inner membrane proteins TolA, TolQ and TolR, the periplasmic protein TolB and the outer membrane protein Pal. They form a network linking the inner and outer membranes and the peptidoglycan layer.

Its subcellular location is the periplasm. In terms of biological role, part of the Tol-Pal system, which plays a role in outer membrane invagination during cell division and is important for maintaining outer membrane integrity. TolB occupies a key intermediary position in the Tol-Pal system because it communicates directly with both membrane-embedded components, Pal in the outer membrane and TolA in the inner membrane. The polypeptide is Tol-Pal system protein TolB (Shigella boydii serotype 4 (strain Sb227)).